We begin with the raw amino-acid sequence, 486 residues long: Transcriptional regulator ERG (486 aa).

The span at 41 to 54 (TASSSSDYGQTSKM) shows a compositional bias: polar residues. Disordered stretches follow at residues 41–62 (TASS…PQQD) and 79–99 (PSQV…KGGK). Phosphoserine occurs at positions 55, 88, and 103. Residues 120–206 (VPPPNMTTNE…SHLHYLRETP (87 aa)) enclose the PNT domain. The segment at 249 to 311 (QRITTRPDLP…ILGPTSSRLA (63 aa)) is disordered. The segment covering 271–284 (SHLTPQSKAAQPSP) has biased composition (polar residues). K289 is covalently cross-linked (Glycyl lysine isopeptide (Lys-Gly) (interchain with G-Cter in SUMO2)). A DNA-binding region (ETS) is located at residues 318–398 (IQLWQFLLEL…HGKRYAYKFD (81 aa)).

This sequence belongs to the ETS family. Identified in a IGF2BP1-dependent mRNP granule complex containing untranslated mRNAs. Interacts with SETDB1.

It is found in the nucleus. The protein resides in the cytoplasm. Functionally, transcriptional regulator. May participate in transcriptional regulation through the recruitment of SETDB1 histone methyltransferase and subsequent modification of local chromatin structure. The protein is Transcriptional regulator ERG (Erg) of Mus musculus (Mouse).